We begin with the raw amino-acid sequence, 175 residues long: ATP synthase subunit b (175 aa).

The chain crosses the membrane as a helical span at residues 18–38 (VTSWEPFVANLIAFILMVVIL).

This sequence belongs to the ATPase B chain family. F-type ATPases have 2 components, F(1) - the catalytic core - and F(0) - the membrane proton channel. F(1) has five subunits: alpha(3), beta(3), gamma(1), delta(1), epsilon(1). F(0) has three main subunits: a(1), b(2) and c(10-14). The alpha and beta chains form an alternating ring which encloses part of the gamma chain. F(1) is attached to F(0) by a central stalk formed by the gamma and epsilon chains, while a peripheral stalk is formed by the delta and b chains.

The protein resides in the cell inner membrane. In terms of biological role, f(1)F(0) ATP synthase produces ATP from ADP in the presence of a proton or sodium gradient. F-type ATPases consist of two structural domains, F(1) containing the extramembraneous catalytic core and F(0) containing the membrane proton channel, linked together by a central stalk and a peripheral stalk. During catalysis, ATP synthesis in the catalytic domain of F(1) is coupled via a rotary mechanism of the central stalk subunits to proton translocation. Component of the F(0) channel, it forms part of the peripheral stalk, linking F(1) to F(0). The sequence is that of ATP synthase subunit b from Akkermansia muciniphila (strain ATCC BAA-835 / DSM 22959 / JCM 33894 / BCRC 81048 / CCUG 64013 / CIP 107961 / Muc).